The following is a 278-amino-acid chain: Probable cytochrome c oxidase subunit 3 (278 aa).

6 consecutive transmembrane segments (helical) span residues proline 21 to methionine 41, phenylalanine 46 to tryptophan 66, isoleucine 89 to phenylalanine 109, cysteine 174 to tyrosine 194, phenylalanine 212 to valine 232, and alanine 256 to leucine 276.

The protein belongs to the cytochrome c oxidase subunit 3 family.

It is found in the cell membrane. It carries out the reaction 4 Fe(II)-[cytochrome c] + O2 + 8 H(+)(in) = 4 Fe(III)-[cytochrome c] + 2 H2O + 4 H(+)(out). The sequence is that of Probable cytochrome c oxidase subunit 3 (ctaE) from Rickettsia prowazekii (strain Madrid E).